The primary structure comprises 463 residues: V-type proton ATPase subunit S1 (463 aa).

An N-terminal signal peptide occupies residues 1–32 (MMAATVVSRIRTGTGRAPVMWLSLSLVAVAAA). Positions 33-225 (VATEQQVPLV…TAVRPSRVAR (193 aa)) are excised as a propeptide. The Lumenal portion of the chain corresponds to 33–412 (VATEQQVPLV…EQFSYASDCA (380 aa)). N-linked (GlcNAc...) asparagine glycosylation is found at Asn-164, Asn-255, Asn-267, Asn-290, Asn-297, Asn-344, Asn-351, and Asn-399. Cys-365 and Cys-411 are joined by a disulfide. Residues 413–433 (GFFSPGIWMGLLTTLFMLFIF) traverse the membrane as a helical segment. At 434-463 (TYGLHMILSLKTMDRFDDHKGPTITLTQIV) the chain is on the cytoplasmic side.

It belongs to the vacuolar ATPase subunit S1 family. In terms of assembly, accessory component of the multisubunit proton-transporting vacuolar (V)-ATPase protein pump. Interacts (via N-terminus) with ATP6AP2 (via N-terminus). Interacts with RNASEK. Interacts with TMEM106B (via C-terminus). N-glycosylated. In terms of tissue distribution, expressed in brain cortex (at protein level). Highly expressed in islets of Langerhans. Expressed in pancreatic acini, pituitary gland, adrenal gland, lung, brain and bone marrow.

It is found in the endoplasmic reticulum membrane. The protein resides in the endoplasmic reticulum-Golgi intermediate compartment membrane. Its subcellular location is the cytoplasmic vesicle. The protein localises to the secretory vesicle. It localises to the synaptic vesicle membrane. It is found in the clathrin-coated vesicle membrane. Functionally, accessory subunit of the proton-transporting vacuolar (V)-ATPase protein pump, which is required for luminal acidification of secretory vesicles. Guides the V-type ATPase into specialized subcellular compartments, such as neuroendocrine regulated secretory vesicles or the ruffled border of the osteoclast, thereby regulating its activity. Involved in membrane trafficking and Ca(2+)-dependent membrane fusion. May play a role in the assembly of the V-type ATPase complex. In aerobic conditions, involved in intracellular iron homeostasis, thus triggering the activity of Fe(2+) prolyl hydroxylase (PHD) enzymes, and leading to HIF1A hydroxylation and subsequent proteasomal degradation. In islets of Langerhans cells, may regulate the acidification of dense-core secretory granules. This Mus musculus (Mouse) protein is V-type proton ATPase subunit S1 (Atp6ap1).